A 158-amino-acid chain; its full sequence is Mitotic-spindle organizing protein 2B (158 aa).

Residue serine 34 is modified to Phosphoserine. Residues 84–158 form a disordered region; sequence RLASEPQDPA…PGKSPTRGST (75 aa). Over residues 111–122 the composition is skewed to low complexity; it reads GSAALGGALALA. A compositionally biased stretch (polar residues) spans 128 to 140; sequence EGSSQRMPRQPSA. Serine 152 carries the post-translational modification Phosphoserine.

It belongs to the MOZART2 family. In terms of assembly, associates with the gamma-tubulin ring complex (gTuRC) consisting of TUBGCP2, TUBGCP3, TUBGCP4, TUBGCP5 and TUBGCP6 and gamma-tubulin TUBG1 or TUBG2; within the complex, interacts with TUBGCP2; the interaction plays a role in gTuRC activation. Interacts with TUBG1.

The protein resides in the cytoplasm. The protein localises to the cytoskeleton. It is found in the microtubule organizing center. It localises to the centrosome. Its subcellular location is the spindle. In terms of biological role, required for the recruitment and the assembly of the gamma-tubulin ring complex (gTuRC) at the centrosome. The gTuRC regulates the minus-end nucleation of alpha-beta tubulin heterodimers that grow into microtubule protafilaments, a critical step in centrosome duplication and spindle formation. The sequence is that of Mitotic-spindle organizing protein 2B (MZT2B) from Homo sapiens (Human).